The sequence spans 258 residues: Putative cysteine-rich repeat secretory protein 61 (258 aa).

The signal sequence occupies residues 1–31; sequence MSSSFIPKRIALVLNLAMVAIQVFFIRSVSS. Gnk2-homologous domains lie at 38–140 and 146–253; these read YLYH…PTAF and DKNK…IYPF.

Belongs to the cysteine-rich repeat secretory protein family.

Its subcellular location is the secreted. This Arabidopsis thaliana (Mouse-ear cress) protein is Putative cysteine-rich repeat secretory protein 61 (CRRSP61).